The primary structure comprises 186 residues: DNA damage up-regulated protein (186 aa).

The interval 147 to 166 (ATENGEGCRPARDPASSPSS) is disordered.

Interacts with DNA damage response proteins ATR, H2AX, PCNA, RAD18 and RAD51C. Forms a complex with H2AX and RAD18 following DDUP phosphorylation. Post-translationally, phosphorylated in an ATR-dependent manner; phosphorylation is required for interaction with H2AX and RAD18 and for DDUP-mediated DNA damage repair.

The protein resides in the nucleus. Its subcellular location is the chromosome. In terms of biological role, promotes DNA damage repair through both homologous recombination repair (HRR) and post-replication repair (PRR) mechanisms. Enhances the retention of DNA damage response protein RAD18 at sites of DNA damage. This allows for HRR via association of RAD18 with RAD51C and for PRR via RAD18-mediated promotion of PCNA monoubiquitination. In Homo sapiens (Human), this protein is DNA damage up-regulated protein.